The chain runs to 421 residues: NADP(+)-dependent glutamate dehydrogenase (421 aa).

Lysine 70 and lysine 94 together coordinate substrate. The active-site Proton donor is the lysine 106. NADP(+)-binding residues include threonine 190 and asparagine 221. Serine 354 lines the substrate pocket.

It belongs to the Glu/Leu/Phe/Val dehydrogenases family. Homohexamer.

It carries out the reaction L-glutamate + NADP(+) + H2O = 2-oxoglutarate + NH4(+) + NADPH + H(+). Is not regulated allosterically. Activity is inhibited in the presence of high ionic strength; the inhibitory effect of KCl is slightly higher than that of NaCl. Functionally, catalyzes the reversible oxidative deamination of L-glutamate to 2-oxoglutarate and ammonia, thereby playing a key role at the intersection of the carbon and nitrogen metabolic pathways. Shows a high preference for NADP(+)/NADPH as the acceptor/donor over NAD(+)/NADH. May function in vivo in the synthetic direction. Also catalyzes at very low rates the oxidative deamination of L-2-aminobutyrate, and the reductive amination of 2-oxovalerate and 2-oxobutyrate. The polypeptide is NADP(+)-dependent glutamate dehydrogenase (Pyrobaculum calidifontis (strain DSM 21063 / JCM 11548 / VA1)).